The following is a 244-amino-acid chain: VEQTERSRKLAEQELIETSERVQLLHSQNTSLINQKKKMDADLSQLQTEVEEAVQECRNAEEKAKKAITDAAMMAEELKKEQDTSAHLERMKKNMEQTIKDLQHRLDEAEQIALKGGKKQLQKLEARVRELENELEAEQKRNAESVKGMRKSERRIKELTYQTEEDRKNLLRLQDLVDKLQLKVKAYKRQAEEAEEQANTNLSKFRKVQHELDEAEERADIAESQVNKLRAKSRDIGTKGLNEE.

Residues 1 to 244 form a rodlike tail (S2 and LMM domains) region; it reads VEQTERSRKL…DIGTKGLNEE (244 aa). Residues 1 to 244 are a coiled coil; it reads VEQTERSRKL…DIGTKGLNEE (244 aa). The interval 216-244 is disordered; that stretch reads EERADIAESQVNKLRAKSRDIGTKGLNEE. Residues 232-244 show a composition bias toward basic and acidic residues; it reads KSRDIGTKGLNEE.

Muscle myosin is a hexameric protein that consists of 2 heavy chain subunits (MHC), 2 alkali light chain subunits (MLC) and 2 regulatory light chain subunits (MLC-2). Interacts with ECPAS. Interacts (via C-terminus) with LRRC39.

Its subcellular location is the cytoplasm. It localises to the myofibril. The protein resides in the sarcomere. Myosins are actin-based motor molecules with ATPase activity essential for muscle contraction. Forms regular bipolar thick filaments that, together with actin thin filaments, constitute the fundamental contractile unit of skeletal and cardiac muscle. The protein is Myosin-7 (MYH7) of Papio hamadryas (Hamadryas baboon).